We begin with the raw amino-acid sequence, 102 residues long: Large ribosomal subunit protein bL21 (102 aa).

The protein belongs to the bacterial ribosomal protein bL21 family. Part of the 50S ribosomal subunit. Contacts protein L20.

In terms of biological role, this protein binds to 23S rRNA in the presence of protein L20. In Bacillus licheniformis (strain ATCC 14580 / DSM 13 / JCM 2505 / CCUG 7422 / NBRC 12200 / NCIMB 9375 / NCTC 10341 / NRRL NRS-1264 / Gibson 46), this protein is Large ribosomal subunit protein bL21.